We begin with the raw amino-acid sequence, 341 residues long: Glyceraldehyde-3-phosphate dehydrogenase 2 (341 aa).

NAD(+)-binding positions include 12–13 (RI), arginine 78, and threonine 120. Residues 152–154 (SCT) and threonine 183 contribute to the D-glyceraldehyde 3-phosphate site. Catalysis depends on cysteine 153, which acts as the Nucleophile. Residue asparagine 184 coordinates NAD(+). D-glyceraldehyde 3-phosphate-binding positions include arginine 198, 211 to 212 (TG), and arginine 234. Asparagine 313 contacts NAD(+).

It belongs to the glyceraldehyde-3-phosphate dehydrogenase family. In terms of assembly, homotetramer.

It is found in the cytoplasm. It catalyses the reaction D-glyceraldehyde 3-phosphate + phosphate + NAD(+) = (2R)-3-phospho-glyceroyl phosphate + NADH + H(+). It participates in carbohydrate degradation; glycolysis; pyruvate from D-glyceraldehyde 3-phosphate: step 1/5. Its function is as follows. Catalyzes the oxidative phosphorylation of glyceraldehyde 3-phosphate (G3P) to 1,3-bisphosphoglycerate (BPG) using the cofactor NAD. The first reaction step involves the formation of a hemiacetal intermediate between G3P and a cysteine residue, and this hemiacetal intermediate is then oxidized to a thioester, with concomitant reduction of NAD to NADH. The reduced NADH is then exchanged with the second NAD, and the thioester is attacked by a nucleophilic inorganic phosphate to produce BPG. The sequence is that of Glyceraldehyde-3-phosphate dehydrogenase 2 (gapA2) from Staphylococcus epidermidis (strain ATCC 35984 / DSM 28319 / BCRC 17069 / CCUG 31568 / BM 3577 / RP62A).